Consider the following 317-residue polypeptide: Melanocyte-stimulating hormone receptor (317 aa).

Residues 1 to 37 (MAVQGSQRRLLGSLNSTPTAIPQLGLAANQTGAWCLE) are Extracellular-facing. A glycan (N-linked (GlcNAc...) asparagine) is linked at N29. A helical transmembrane segment spans residues 38-63 (VSIPDGLFLSLGLVSLVENVLVVATI). At 64–72 (AKNRNLHSP) the chain is on the cytoplasmic side. A helical membrane pass occupies residues 73–93 (MYCFICCLALSDLLVSGGNVL). Over 94–118 (ETAVILLLEAGALAARAAVVQQLDN) the chain is Extracellular. Residues 119-140 (VIDVITCSSMLSSLCFLGAIAV) form a helical membrane-spanning segment. The Cytoplasmic segment spans residues 141–163 (DRYISIFYALRYHSIVTLPRARR). A helical transmembrane segment spans residues 164–183 (AIAAIWVASVLFSTLFIAYY). The Extracellular segment spans residues 184–191 (DHAAVLLC). The helical transmembrane segment at 192–211 (LVVFFLAMLVLMAVLYVHML) threads the bilayer. The Cytoplasmic portion of the chain corresponds to 212–240 (ARACQHAQGIARLHKRQRPVHQGFGLKGA). A helical transmembrane segment spans residues 241-266 (VTLTILLGIFFLCWGPFFLHLTLIVL). Residues 267-279 (CPQHPTCSCIFKN) are Extracellular-facing. The helical transmembrane segment at 280 to 300 (FNLFLALIICNAIIDPLIYAF) threads the bilayer. The Cytoplasmic portion of the chain corresponds to 301–317 (RSQELRRTLKEVLTCSW). The S-palmitoyl cysteine moiety is linked to residue C315.

Belongs to the G-protein coupled receptor 1 family. In terms of assembly, interacts with MGRN1, but does not undergo MGRN1-mediated ubiquitination; this interaction competes with GNAS-binding and thus inhibits agonist-induced cAMP production. Interacts with OPN3; the interaction results in a decrease in MC1R-mediated cAMP signaling and ultimately a decrease in melanin production in melanocytes.

It is found in the cell membrane. Receptor for MSH (alpha, beta and gamma) and ACTH. The activity of this receptor is mediated by G proteins which activate adenylate cyclase. Mediates melanogenesis, the production of eumelanin (black/brown) and phaeomelanin (red/yellow), via regulation of cAMP signaling in melanocytes. In Pongo pygmaeus (Bornean orangutan), this protein is Melanocyte-stimulating hormone receptor (MC1R).